We begin with the raw amino-acid sequence, 230 residues long: Sugar fermentation stimulation protein homolog (230 aa).

It belongs to the SfsA family.

The chain is Sugar fermentation stimulation protein homolog from Clostridium perfringens (strain ATCC 13124 / DSM 756 / JCM 1290 / NCIMB 6125 / NCTC 8237 / Type A).